The primary structure comprises 156 residues: Regulatory protein RecX (156 aa).

Belongs to the RecX family.

It is found in the cytoplasm. Functionally, modulates RecA activity. The protein is Regulatory protein RecX of Pseudomonas putida (strain ATCC 47054 / DSM 6125 / CFBP 8728 / NCIMB 11950 / KT2440).